The following is a 288-amino-acid chain: 33 kDa chaperonin (288 aa).

Intrachain disulfides connect C235–C237 and C268–C271.

This sequence belongs to the HSP33 family. Post-translationally, under oxidizing conditions two disulfide bonds are formed involving the reactive cysteines. Under reducing conditions zinc is bound to the reactive cysteines and the protein is inactive.

Its subcellular location is the cytoplasm. Its function is as follows. Redox regulated molecular chaperone. Protects both thermally unfolding and oxidatively damaged proteins from irreversible aggregation. Plays an important role in the bacterial defense system toward oxidative stress. This is 33 kDa chaperonin from Streptococcus thermophilus (strain CNRZ 1066).